The chain runs to 318 residues: Nucleotide-binding protein Jann_0539 (318 aa).

17-24 (GPSGAGRS) is a binding site for ATP. 64-67 (DPRT) provides a ligand contact to GTP. Positions 278 to 318 (GWQVSKRHRDVDKDASENSDRDRGASARTAASTDDGEAEQP) are disordered. Residues 286 to 302 (RDVDKDASENSDRDRGA) show a composition bias toward basic and acidic residues.

Belongs to the RapZ-like family.

Its function is as follows. Displays ATPase and GTPase activities. This chain is Nucleotide-binding protein Jann_0539, found in Jannaschia sp. (strain CCS1).